Consider the following 429-residue polypeptide: MAAIIVVGAQWGDEGKGKATDILGGQVDYVVKPNGGNNAGHTVVVGGEKYELKLLPAGILSDNATSIIGNGCVVNLEALFEEIDGLQARGADTSHLRVSANAQLVAPYHVAIDRVSERFLGKRAIGTTGRGIGPTYQDKVGRVGIRAQDLLDESILRQKIESALDKKNQMLVKMYNRRAIEPEEVVQYFLSYADRLAPMLIDSSKVLNEALDRGERVLMEGGQATMLDVDHGTYPFVTSSNPTTGGACVGSGVGPTRITSSLGIIKAYTTRVGAGPFPTELFDKWGEYLQTTGGEVGVNTGRPRRCGWYDSVIARYASRVNGFTDYFLTKLDVLTGIGEIPICVAYDVDGVRHDEMPMTQTEFHHATPIYETMPAWDEDITGCRTFEELPEKAQDYVKRLEELSGCRMSYIGVGPGRDQTIVINDILKD.

Residues 12-18 (GDEGKGK) and 40-42 (GHT) each bind GTP. Catalysis depends on aspartate 13, which acts as the Proton acceptor. Mg(2+)-binding residues include aspartate 13 and glycine 40. IMP-binding positions include 13–16 (DEGK), 38–41 (NAGH), threonine 128, arginine 142, glutamine 223, threonine 238, and arginine 302. The Proton donor role is filled by histidine 41. Substrate is bound at residue 298 to 304 (VNTGRPR). GTP is bound by residues arginine 304, 330–332 (KLD), and 412–414 (GVG).

The protein belongs to the adenylosuccinate synthetase family. Homodimer. It depends on Mg(2+) as a cofactor.

It localises to the cytoplasm. It carries out the reaction IMP + L-aspartate + GTP = N(6)-(1,2-dicarboxyethyl)-AMP + GDP + phosphate + 2 H(+). It functions in the pathway purine metabolism; AMP biosynthesis via de novo pathway; AMP from IMP: step 1/2. Plays an important role in the de novo pathway of purine nucleotide biosynthesis. Catalyzes the first committed step in the biosynthesis of AMP from IMP. This chain is Adenylosuccinate synthetase, found in Corynebacterium urealyticum (strain ATCC 43042 / DSM 7109).